The chain runs to 180 residues: Protein SPMIP9 (180 aa).

In terms of assembly, microtubule inner protein component of sperm flagellar doublet microtubules.

The protein localises to the nucleus. It is found in the cytoplasm. Its subcellular location is the cytoskeleton. The protein resides in the flagellum axoneme. Functionally, microtubule inner protein (MIP) part of the dynein-decorated doublet microtubules (DMTs) in flagella axoneme. In Bos taurus (Bovine), this protein is Protein SPMIP9 (SPMIP9).